The primary structure comprises 146 residues: Transcriptional regulator MraZ (146 aa).

SpoVT-AbrB domains follow at residues 5 to 47 (EYYH…TITD) and 76 to 119 (SIQV…AKEK).

Belongs to the MraZ family. As to quaternary structure, forms oligomers.

It is found in the cytoplasm. The protein localises to the nucleoid. The polypeptide is Transcriptional regulator MraZ (Dictyoglomus thermophilum (strain ATCC 35947 / DSM 3960 / H-6-12)).